A 126-amino-acid chain; its full sequence is Fluoride-specific ion channel FluC (126 aa).

4 helical membrane passes run 5–25 (GFVA…FFSV), 36–56 (YGTL…VAFF), 69–89 (LAVT…SEVI), and 99–119 (WAML…AFGI). Residues glycine 76 and threonine 79 each coordinate Na(+).

Belongs to the fluoride channel Fluc/FEX (TC 1.A.43) family.

Its subcellular location is the cell inner membrane. It carries out the reaction fluoride(in) = fluoride(out). Its activity is regulated as follows. Na(+) is not transported, but it plays an essential structural role and its presence is essential for fluoride channel function. In terms of biological role, fluoride-specific ion channel. Important for reducing fluoride concentration in the cell, thus reducing its toxicity. This is Fluoride-specific ion channel FluC from Cupriavidus metallidurans (strain ATCC 43123 / DSM 2839 / NBRC 102507 / CH34) (Ralstonia metallidurans).